The sequence spans 417 residues: Riboflavin biosynthesis protein RibBA (417 aa).

Residues 1 to 204 (MTRLDSIERA…IADLIEWRRK (204 aa)) form a DHBP synthase region. D-ribulose 5-phosphate-binding positions include 28 to 29 (RE), aspartate 33, 141 to 145 (RPGHT), and glutamate 165. Glutamate 29 lines the Mg(2+) pocket. Histidine 144 lines the Mg(2+) pocket. The segment at 205 to 417 (HEKHVQRIAE…LDDHPEADGA (213 aa)) is GTP cyclohydrolase II. Residue 259 to 263 (RVHSE) coordinates GTP. Zn(2+)-binding residues include cysteine 264, cysteine 275, and cysteine 277. GTP contacts are provided by residues glutamine 280, 303–305 (EGR), and threonine 325. Aspartate 337 serves as the catalytic Proton acceptor; for GTP cyclohydrolase activity. Arginine 339 (nucleophile; for GTP cyclohydrolase activity) is an active-site residue. The GTP site is built by threonine 360 and lysine 365.

In the N-terminal section; belongs to the DHBP synthase family. This sequence in the C-terminal section; belongs to the GTP cyclohydrolase II family. Requires Mg(2+) as cofactor. Mn(2+) is required as a cofactor. Zn(2+) serves as cofactor.

The catalysed reaction is D-ribulose 5-phosphate = (2S)-2-hydroxy-3-oxobutyl phosphate + formate + H(+). The enzyme catalyses GTP + 4 H2O = 2,5-diamino-6-hydroxy-4-(5-phosphoribosylamino)-pyrimidine + formate + 2 phosphate + 3 H(+). It participates in cofactor biosynthesis; riboflavin biosynthesis; 2-hydroxy-3-oxobutyl phosphate from D-ribulose 5-phosphate: step 1/1. It functions in the pathway cofactor biosynthesis; riboflavin biosynthesis; 5-amino-6-(D-ribitylamino)uracil from GTP: step 1/4. Functionally, catalyzes the conversion of D-ribulose 5-phosphate to formate and 3,4-dihydroxy-2-butanone 4-phosphate. In terms of biological role, catalyzes the conversion of GTP to 2,5-diamino-6-ribosylamino-4(3H)-pyrimidinone 5'-phosphate (DARP), formate and pyrophosphate. This chain is Riboflavin biosynthesis protein RibBA, found in Mycobacteroides abscessus (strain ATCC 19977 / DSM 44196 / CCUG 20993 / CIP 104536 / JCM 13569 / NCTC 13031 / TMC 1543 / L948) (Mycobacterium abscessus).